A 244-amino-acid chain; its full sequence is Putative outer membrane protein RC0105 (244 aa).

The N-terminal stretch at M1–A23 is a signal peptide.

It belongs to the OmpW/AlkL family.

The protein localises to the cell outer membrane. The sequence is that of Putative outer membrane protein RC0105 from Rickettsia conorii (strain ATCC VR-613 / Malish 7).